The primary structure comprises 542 residues: CTP synthase (542 aa).

Residues 1-265 (MARYVFITGG…DNEVLAAFGI (265 aa)) form an amidoligase domain region. Residue Ser-13 participates in CTP binding. Residue Ser-13 coordinates UTP. Residues 14 to 19 (SLGKGI) and Asp-71 each bind ATP. Residues Asp-71 and Glu-139 each contribute to the Mg(2+) site. CTP contacts are provided by residues 146–148 (DIE), 186–191 (KTKPTQ), and Lys-222. UTP is bound by residues 186–191 (KTKPTQ) and Lys-222. The Glutamine amidotransferase type-1 domain maps to 291 to 541 (TIAIVGKYTG…IEAALEQSRL (251 aa)). Gly-353 serves as a coordination point for L-glutamine. The Nucleophile; for glutamine hydrolysis role is filled by Cys-380. L-glutamine-binding positions include 381–384 (FGMQ), Glu-404, and Arg-469. Residues His-514 and Glu-516 contribute to the active site.

This sequence belongs to the CTP synthase family. In terms of assembly, homotetramer.

It carries out the reaction UTP + L-glutamine + ATP + H2O = CTP + L-glutamate + ADP + phosphate + 2 H(+). It catalyses the reaction L-glutamine + H2O = L-glutamate + NH4(+). The enzyme catalyses UTP + NH4(+) + ATP = CTP + ADP + phosphate + 2 H(+). Its pathway is pyrimidine metabolism; CTP biosynthesis via de novo pathway; CTP from UDP: step 2/2. Allosterically activated by GTP, when glutamine is the substrate; GTP has no effect on the reaction when ammonia is the substrate. The allosteric effector GTP functions by stabilizing the protein conformation that binds the tetrahedral intermediate(s) formed during glutamine hydrolysis. Inhibited by the product CTP, via allosteric rather than competitive inhibition. Its function is as follows. Catalyzes the ATP-dependent amination of UTP to CTP with either L-glutamine or ammonia as the source of nitrogen. Regulates intracellular CTP levels through interactions with the four ribonucleotide triphosphates. The polypeptide is CTP synthase (Rhizobium meliloti (strain 1021) (Ensifer meliloti)).